Reading from the N-terminus, the 325-residue chain is DNA-directed RNA polymerase subunit alpha (325 aa).

The tract at residues 1–238 (MSLKSLLKGF…EHLTVFINFE (238 aa)) is alpha N-terminal domain (alpha-NTD). Positions 254–325 (KLKASLSKHV…LGLSFGMRDF (72 aa)) are alpha C-terminal domain (alpha-CTD).

It belongs to the RNA polymerase alpha chain family. In terms of assembly, homodimer. The RNAP catalytic core consists of 2 alpha, 1 beta, 1 beta' and 1 omega subunit. When a sigma factor is associated with the core the holoenzyme is formed, which can initiate transcription.

It catalyses the reaction RNA(n) + a ribonucleoside 5'-triphosphate = RNA(n+1) + diphosphate. In terms of biological role, DNA-dependent RNA polymerase catalyzes the transcription of DNA into RNA using the four ribonucleoside triphosphates as substrates. The sequence is that of DNA-directed RNA polymerase subunit alpha from Leptospira borgpetersenii serovar Hardjo-bovis (strain JB197).